The chain runs to 256 residues: 3-hydroxy-5-phosphonooxypentane-2,4-dione thiolase (256 aa).

Lys-168 acts as the Schiff-base intermediate with substrate in catalysis.

The protein belongs to the DeoC/FbaB aldolase family. Homodecamer.

The protein resides in the cytoplasm. It carries out the reaction dihydroxyacetone phosphate + acetyl-CoA = 3-hydroxy-2,4-dioxopentyl phosphate + CoA. Functionally, involved in the degradation of phospho-AI-2, thereby terminating induction of the lsr operon and closing the AI-2 signaling cycle. Catalyzes the transfer of an acetyl moiety from 3-hydroxy-5-phosphonooxypentane-2,4-dione to CoA to form glycerone phosphate and acetyl-CoA. The sequence is that of 3-hydroxy-5-phosphonooxypentane-2,4-dione thiolase (lsrF) from Shigella flexneri.